The chain runs to 651 residues: PTS system sucrose-specific EIIBCA component (651 aa).

The region spanning 3–86 (HQEVADRVLN…IVKTGLKEVT (84 aa)) is the PTS EIIB type-1 domain. Cys25 acts as the Phosphocysteine intermediate; for EIIB activity in catalysis. Helical transmembrane passes span 109 to 129 (VLSDIFIPIVPALVAGGLLMA), 158 to 178 (MINAMASAPFTFLPILLGFSA), 182 to 202 (FGGNPYLGATMGMIMVLPSLV), 204 to 224 (GYSVATTMAAGKMVYWNVFGL), 226 to 246 (VAQAGYQGQVLPVLGVAFILA), 264 to 284 (FTPMFAIVITGFLTFTIVGPV), 303 to 323 (TGWIGMGIFGLLYSAIVITGL), 345 to 365 (FIFPVASMANIGQGAATLAIF), 404 to 424 (FVFAAIASGIASAFLGLFHVL), and 444 to 464 (IPAFMLSAVISFVVAFIPTFI). The PTS EIIC type-1 domain occupies 121–481 (LVAGGLLMAL…DDRDQVKSPA (361 aa)). Residues 510 to 614 (DQVFSAEIMG…DPTVMLIVTN (105 aa)) enclose the PTS EIIA type-1 domain. His562 serves as the catalytic Tele-phosphohistidine intermediate; for EIIA activity.

The protein localises to the cell membrane. The catalysed reaction is N(pros)-phospho-L-histidyl-[protein](out) + sucrose = sucrose 6(G)-phosphate(in) + L-histidyl-[protein]. Functionally, the phosphoenolpyruvate-dependent sugar phosphotransferase system (sugar PTS), a major carbohydrate active transport system, catalyzes the phosphorylation of incoming sugar substrates concomitantly with their translocation across the cell membrane. This system is involved in sucrose transport. The protein is PTS system sucrose-specific EIIBCA component (scrA) of Pediococcus pentosaceus.